Consider the following 76-residue polypeptide: UPF0729 protein C18orf32 homolog (76 aa).

The segment at 1 to 37 (MVCIPCIVIPVLLWVYKKFLEPYIYPLISPFVSRMWP) is necessary for its localzation to the endoplasmic reticulum and lipid droplets. Residues 47-56 (KNKGKVDYKG) show a composition bias toward basic and acidic residues. The tract at residues 47–76 (KNKGKVDYKGADINGLPTRGPTEMCDKKKD) is disordered.

Belongs to the UPF0729 family. Interacts with DERL1 and AMFR. Post-translationally, undergoes ER-associated degradation (ERAD).

Its subcellular location is the endoplasmic reticulum. It localises to the lipid droplet. Functionally, may activate the NF-kappa-B signaling pathway. The polypeptide is UPF0729 protein C18orf32 homolog (Bos taurus (Bovine)).